Here is a 58-residue protein sequence, read N- to C-terminus: Large ribosomal subunit protein uL30 (58 aa).

Belongs to the universal ribosomal protein uL30 family. As to quaternary structure, part of the 50S ribosomal subunit.

The protein is Large ribosomal subunit protein uL30 of Acinetobacter baumannii (strain AB307-0294).